Here is a 314-residue protein sequence, read N- to C-terminus: Putative steroid dehydrogenase 1 (314 aa).

Position 47-76 (47-76) interacts with NADP(+); that stretch reads ASWAVVTGATDGIGKSYSFELAKRGFNVYI. Tyrosine 202 is a catalytic residue.

The protein belongs to the short-chain dehydrogenases/reductases (SDR) family. 17-beta-HSD 3 subfamily.

The chain is Putative steroid dehydrogenase 1 (stdh-1) from Caenorhabditis elegans.